The primary structure comprises 299 residues: Probable tyrosine phosphatase protein J4 (299 aa).

The Tyrosine-protein phosphatase domain maps to 16–289 (VEALDFLSFM…VYCYQALYVW (274 aa)). Cysteine 230 serves as the catalytic Phosphocysteine intermediate.

It belongs to the protein-tyrosine phosphatase family.

The catalysed reaction is O-phospho-L-tyrosyl-[protein] + H2O = L-tyrosyl-[protein] + phosphate. This is Probable tyrosine phosphatase protein J4 (J5) from Microplitis demolitor bracovirus (isolate Webb) (MdBV).